The following is a 242-amino-acid chain: Caffeoyl-CoA O-methyltransferase 4 (242 aa).

Lys16 is a binding site for substrate. S-adenosyl-L-methionine-binding positions include Thr58, Glu80, 82 to 83, Ser88, Asp106, and Ala135; that span reads GV. Asp158 provides a ligand contact to substrate. Asp158 is an a divalent metal cation binding site. Asp160 is a binding site for S-adenosyl-L-methionine. Asp184 and Asn185 together coordinate a divalent metal cation. Asn189 is a binding site for substrate.

This sequence belongs to the class I-like SAM-binding methyltransferase superfamily. Cation-dependent O-methyltransferase family. CCoAMT subfamily. Mg(2+) serves as cofactor. As to expression, mostly expressed in the bottom and middle parts of the stems.

The catalysed reaction is (E)-caffeoyl-CoA + S-adenosyl-L-methionine = (E)-feruloyl-CoA + S-adenosyl-L-homocysteine + H(+). It participates in aromatic compound metabolism; phenylpropanoid biosynthesis. Methylates caffeoyl-CoA to feruloyl-CoA and 5-hydroxyferuloyl-CoA to sinapoyl-CoA. Plays a role in the synthesis of feruloylated polysaccharides. Involved in the reinforcement of the plant cell wall. Also involved in the responding to wounding or pathogen challenge by the increased formation of cell wall-bound ferulic acid polymers. The chain is Caffeoyl-CoA O-methyltransferase 4 (CCOAOMT4) from Nicotiana tabacum (Common tobacco).